The sequence spans 119 residues: Ribosome-binding factor A (119 aa).

It belongs to the RbfA family. As to quaternary structure, monomer. Binds 30S ribosomal subunits, but not 50S ribosomal subunits or 70S ribosomes.

Its subcellular location is the cytoplasm. Its function is as follows. One of several proteins that assist in the late maturation steps of the functional core of the 30S ribosomal subunit. Associates with free 30S ribosomal subunits (but not with 30S subunits that are part of 70S ribosomes or polysomes). Required for efficient processing of 16S rRNA. May interact with the 5'-terminal helix region of 16S rRNA. The chain is Ribosome-binding factor A from Chlorobium luteolum (strain DSM 273 / BCRC 81028 / 2530) (Pelodictyon luteolum).